Here is a 394-residue protein sequence, read N- to C-terminus: MQVKKLTDLDVRGKKVFIRADLNVPQDEAGNITEDTRIRASIPSIQYCLDNGAAVMVTSHLGRPTEGEVGPDDTLAPVAVRLGQLLHKPVKLIANWVEGGFEVKPGEVVLLENCRCNKGEKKDNEELAKKMAALCDVYVNDAFGTAHRAEATTHGIARFAPVSCAGILMGAEIDALSKALHQPARPLVAIVGGAKVSTKLTILKTLADKVDQLIVGGGIANTFLLAAGKRIGESLAEPEMVREAQQVMDIMKSRGAEVPLPIDVVVADEVSALARANRISVDEVGPHDRILDFGPKTSAKLADIIAHAGTIVWNGPVGVFEHAQFAGGTKMMASAIAHSEAFSIAGGGDTLAAIAKFHIADDVGYISTGGGAFLEFLEGKKLPAIAALEARYEG.

Residues aspartate 21–asparagine 23, arginine 37, histidine 60–arginine 63, arginine 115, and arginine 148 each bind substrate. ATP is bound by residues lysine 199, glutamate 321, and glycine 347–threonine 350.

This sequence belongs to the phosphoglycerate kinase family. In terms of assembly, monomer.

The protein localises to the cytoplasm. The catalysed reaction is (2R)-3-phosphoglycerate + ATP = (2R)-3-phospho-glyceroyl phosphate + ADP. It functions in the pathway carbohydrate degradation; glycolysis; pyruvate from D-glyceraldehyde 3-phosphate: step 2/5. This is Phosphoglycerate kinase from Azoarcus sp. (strain BH72).